We begin with the raw amino-acid sequence, 421 residues long: ATP-dependent RNA helicase RhlB (421 aa).

A Q motif motif is present at residues 9-37 (QKFSDFALHPQVVEALEKKGFYNCTPIQA). One can recognise a Helicase ATP-binding domain in the interval 40–219 (LPLTLAGRDV…FEQMNNAEYV (180 aa)). 53–60 (AQTGTGKT) provides a ligand contact to ATP. The DEAD box signature appears at 165–168 (DEAD). Residues 245-390 (RLLQTLIEEE…VSKYNPEALM (146 aa)) form the Helicase C-terminal domain. The interval 396 to 421 (PLRLTRSRPGNGPRRAGAPRNRRRSG) is disordered. Residues 402 to 414 (SRPGNGPRRAGAP) are compositionally biased toward low complexity.

It belongs to the DEAD box helicase family. RhlB subfamily. As to quaternary structure, component of the RNA degradosome, which is a multiprotein complex involved in RNA processing and mRNA degradation.

Its subcellular location is the cytoplasm. It catalyses the reaction ATP + H2O = ADP + phosphate + H(+). DEAD-box RNA helicase involved in RNA degradation. Has RNA-dependent ATPase activity and unwinds double-stranded RNA. In Salmonella arizonae (strain ATCC BAA-731 / CDC346-86 / RSK2980), this protein is ATP-dependent RNA helicase RhlB.